The sequence spans 156 residues: Putative pre-16S rRNA nuclease (156 aa).

It belongs to the YqgF nuclease family.

The protein localises to the cytoplasm. Could be a nuclease involved in processing of the 5'-end of pre-16S rRNA. This Nocardioides sp. (strain ATCC BAA-499 / JS614) protein is Putative pre-16S rRNA nuclease.